The primary structure comprises 218 residues: Large ribosomal subunit protein uL3 (218 aa).

An N5-methylglutamine modification is found at Q153.

Belongs to the universal ribosomal protein uL3 family. In terms of assembly, part of the 50S ribosomal subunit. Forms a cluster with proteins L14 and L19. Post-translationally, methylated by PrmB.

In terms of biological role, one of the primary rRNA binding proteins, it binds directly near the 3'-end of the 23S rRNA, where it nucleates assembly of the 50S subunit. This chain is Large ribosomal subunit protein uL3, found in Alkalilimnicola ehrlichii (strain ATCC BAA-1101 / DSM 17681 / MLHE-1).